The following is a 152-amino-acid chain: MARHFGMALAPWDVMGGGRFQSKKAMEERRKNGEGIRSFVGASEQTDAEIKISEALAKVAEEHGTESVTAIAIAYVRSKAKNVFPLVGGRKIEHLKQNIEALSIKLTPEQIKYLESIIPFDVGFPTNFIGDDPAVTKKASLLTAMSAQISFD.

Belongs to the aldo/keto reductase family. Aldo/keto reductase 2 subfamily.

Putative aryl-alcohol dehydrogenase. The polypeptide is Putative aryl-alcohol dehydrogenase YFL057C (Saccharomyces cerevisiae (strain ATCC 204508 / S288c) (Baker's yeast)).